Reading from the N-terminus, the 680-residue chain is Dihydroxyacetone phosphate acyltransferase (680 aa).

Residues S12 and S17 each carry the phosphoserine modification. The short motif at 162–167 (HRSYID) is the HXXXXD motif element. K643 carries the N6-acetyllysine modification. A Microbody targeting signal motif is present at residues 678–680 (AKL).

The protein belongs to the GPAT/DAPAT family. Part of a heterotrimeric complex composed of GNPAT, AGPS and a modified form of GNPAT.

The protein localises to the peroxisome membrane. The catalysed reaction is dihydroxyacetone phosphate + an acyl-CoA = a 1-acylglycerone 3-phosphate + CoA. The enzyme catalyses dihydroxyacetone phosphate + hexadecanoyl-CoA = 1-hexadecanoylglycerone 3-phosphate + CoA. It functions in the pathway membrane lipid metabolism; glycerophospholipid metabolism. Its function is as follows. Dihydroxyacetonephosphate acyltransferase catalyzing the first step in the biosynthesis of plasmalogens, a subset of phospholipids that differ from other glycerolipids by having an alkyl chain attached through a vinyl ether linkage at the sn-1 position of the glycerol backbone, and which unique physical properties have an impact on various aspects of cell signaling and membrane biology. The protein is Dihydroxyacetone phosphate acyltransferase of Homo sapiens (Human).